A 462-amino-acid chain; its full sequence is Glycine--tRNA ligase (462 aa).

The substrate site is built by Arg-98 and Glu-174. ATP-binding positions include 206–208 (RNE), 216–221 (FRTREF), 290–291 (EL), and 334–337 (GADR). 221-225 (FEQME) provides a ligand contact to substrate. Substrate is bound at residue 330 to 334 (EPSLG).

Belongs to the class-II aminoacyl-tRNA synthetase family. Homodimer.

Its subcellular location is the cytoplasm. The catalysed reaction is tRNA(Gly) + glycine + ATP = glycyl-tRNA(Gly) + AMP + diphosphate. In terms of biological role, catalyzes the attachment of glycine to tRNA(Gly). The polypeptide is Glycine--tRNA ligase (Lachnoclostridium phytofermentans (strain ATCC 700394 / DSM 18823 / ISDg) (Clostridium phytofermentans)).